A 102-amino-acid chain; its full sequence is Small ribosomal subunit protein uS10 (102 aa).

It belongs to the universal ribosomal protein uS10 family. In terms of assembly, part of the 30S ribosomal subunit.

In terms of biological role, involved in the binding of tRNA to the ribosomes. This Methanosphaera stadtmanae (strain ATCC 43021 / DSM 3091 / JCM 11832 / MCB-3) protein is Small ribosomal subunit protein uS10.